A 419-amino-acid polypeptide reads, in one-letter code: UDP-N-acetylglucosamine 1-carboxyvinyltransferase (419 aa).

22–23 (KN) is a phosphoenolpyruvate binding site. Arginine 91 is a UDP-N-acetyl-alpha-D-glucosamine binding site. Cysteine 115 (proton donor) is an active-site residue. Cysteine 115 carries the 2-(S-cysteinyl)pyruvic acid O-phosphothioketal modification. Residues 120–124 (RPVDL), 160–163 (KVSV), aspartate 305, and valine 327 each bind UDP-N-acetyl-alpha-D-glucosamine.

It belongs to the EPSP synthase family. MurA subfamily.

It is found in the cytoplasm. It carries out the reaction phosphoenolpyruvate + UDP-N-acetyl-alpha-D-glucosamine = UDP-N-acetyl-3-O-(1-carboxyvinyl)-alpha-D-glucosamine + phosphate. The protein operates within cell wall biogenesis; peptidoglycan biosynthesis. Functionally, cell wall formation. Adds enolpyruvyl to UDP-N-acetylglucosamine. This is UDP-N-acetylglucosamine 1-carboxyvinyltransferase from Salmonella agona (strain SL483).